We begin with the raw amino-acid sequence, 312 residues long: tRNA pseudouridine synthase B (312 aa).

Asp-37 (nucleophile) is an active-site residue.

This sequence belongs to the pseudouridine synthase TruB family. Type 1 subfamily.

It carries out the reaction uridine(55) in tRNA = pseudouridine(55) in tRNA. Functionally, responsible for synthesis of pseudouridine from uracil-55 in the psi GC loop of transfer RNAs. This is tRNA pseudouridine synthase B from Thermus thermophilus (strain ATCC BAA-163 / DSM 7039 / HB27).